The sequence spans 236 residues: WUSCHEL-related homeobox 4 (236 aa).

The homeobox; WUS-type DNA-binding region spans 88 to 152; sequence AGTTRWNPSA…NHKARERQKQ (65 aa). Positions 169 to 188 are disordered; it reads PATANETKEAPEKKEKDVED. Basic and acidic residues predominate over residues 174 to 187; the sequence is ETKEAPEKKEKDVE.

It belongs to the WUS homeobox family.

Its subcellular location is the nucleus. In terms of biological role, transcription factor which may be involved in developmental processes. In Oryza sativa subsp. indica (Rice), this protein is WUSCHEL-related homeobox 4 (WOX4).